Here is a 213-residue protein sequence, read N- to C-terminus: ATP-dependent Clp protease proteolytic subunit 1 (213 aa).

Ser-108 acts as the Nucleophile in catalysis. The active site involves His-133.

It belongs to the peptidase S14 family. Fourteen ClpP subunits assemble into 2 heptameric rings which stack back to back to give a disk-like structure with a central cavity, resembling the structure of eukaryotic proteasomes.

Its subcellular location is the cytoplasm. It catalyses the reaction Hydrolysis of proteins to small peptides in the presence of ATP and magnesium. alpha-casein is the usual test substrate. In the absence of ATP, only oligopeptides shorter than five residues are hydrolyzed (such as succinyl-Leu-Tyr-|-NHMec, and Leu-Tyr-Leu-|-Tyr-Trp, in which cleavage of the -Tyr-|-Leu- and -Tyr-|-Trp bonds also occurs).. Cleaves peptides in various proteins in a process that requires ATP hydrolysis. Has a chymotrypsin-like activity. Plays a major role in the degradation of misfolded proteins. This is ATP-dependent Clp protease proteolytic subunit 1 from Frankia casuarinae (strain DSM 45818 / CECT 9043 / HFP020203 / CcI3).